The following is a 182-amino-acid chain: Large ribosomal subunit protein uL5c (182 aa).

This sequence belongs to the universal ribosomal protein uL5 family. In terms of assembly, part of the 50S ribosomal subunit; contacts the 5S rRNA.

The protein localises to the plastid. It localises to the chloroplast. Binds 5S rRNA, forms part of the central protuberance of the 50S subunit. The chain is Large ribosomal subunit protein uL5c (rpl5) from Emiliania huxleyi (Coccolithophore).